A 571-amino-acid chain; its full sequence is Membrane protein insertase YidC (571 aa).

Residues threonine 4–serine 24 traverse the membrane as a helical segment. Residues alanine 29–proline 76 are disordered. Composition is skewed to low complexity over residues proline 34 to alanine 43 and alanine 57 to proline 76. The next 4 membrane-spanning stretches (helical) occupy residues leucine 369–tyrosine 389, glycine 440–valine 460, tyrosine 483–alanine 503, and proline 518–valine 538.

This sequence belongs to the OXA1/ALB3/YidC family. Type 1 subfamily. Interacts with the Sec translocase complex via SecD. Specifically interacts with transmembrane segments of nascent integral membrane proteins during membrane integration.

Its subcellular location is the cell inner membrane. In terms of biological role, required for the insertion and/or proper folding and/or complex formation of integral membrane proteins into the membrane. Involved in integration of membrane proteins that insert both dependently and independently of the Sec translocase complex, as well as at least some lipoproteins. Aids folding of multispanning membrane proteins. The sequence is that of Membrane protein insertase YidC from Stenotrophomonas maltophilia (strain R551-3).